The primary structure comprises 430 residues: Spermatogenic leucine zipper protein 1 (430 aa).

The disordered stretch occupies residues 1-25 (MASSAKSAEMPTISKTVNPTPDPHQ). Positions 62–102 (EQQTAQKFNNLLKEIKDILKNMAGFEEKITEAKELFEETNI) form a coiled coil. A Phosphoserine modification is found at S107. A helix-loop-helix motif region spans residues 166-177 (KINEMLSTNLPV). Positions 178–244 (SLAPEKEDNE…NVQEETMKIR (67 aa)) are basic motif. 2 coiled-coil regions span residues 214–269 (LEEK…KLIK) and 316–351 (SLQLMAALLENECQILQQRVEILKELHHQKQGTLQE). S258 is modified (phosphoserine). Positions 303–324 (LEEQVKKLSHDTYSLQLMAALL) are leucine-zipper.

In terms of assembly, interacts with PPP1CC isoform gamma-2. Post-translationally, phosphorylated by MAPK1/ERK2 and MAPK3/ERK1. Specifically and strongly expressed in the testis. Expressed in several tumor cell lines.

It localises to the cytoplasm. It is found in the nucleus. In terms of biological role, transcription factor that binds to the DNA sequence 5'-CANNTG-3'(E box) and the G-box motif. May play an important role in the regulation of cell proliferation and differentiation during spermatogenesis. The protein is Spermatogenic leucine zipper protein 1 (SPZ1) of Homo sapiens (Human).